The chain runs to 591 residues: L-fucose isomerase (591 aa).

Catalysis depends on proton acceptor residues E337 and D361. 3 residues coordinate Mn(2+): E337, D361, and H528.

This sequence belongs to the L-fucose isomerase family. In terms of assembly, homohexamer. It depends on Mn(2+) as a cofactor.

The protein resides in the cytoplasm. It carries out the reaction L-fucose = L-fuculose. It participates in carbohydrate degradation; L-fucose degradation; L-lactaldehyde and glycerone phosphate from L-fucose: step 1/3. Its function is as follows. Converts the aldose L-fucose into the corresponding ketose L-fuculose. In Salmonella choleraesuis (strain SC-B67), this protein is L-fucose isomerase.